Here is a 363-residue protein sequence, read N- to C-terminus: DNA repair protein rlp1 (363 aa).

It belongs to the RecA family. RAD51 subfamily. Interacts with rdl1 and sws1.

Its subcellular location is the cytoplasm. The protein resides in the nucleus. Its function is as follows. Required for normal levels of meiotic recombination. Acts in the recombinational pathway of double-strand break (DSB) repair together with rhp51, rhp55 and rad22. Required for the full extent of DNA recombination and cell survival under condition of a replication fork collapse. The sequence is that of DNA repair protein rlp1 from Schizosaccharomyces pombe (strain 972 / ATCC 24843) (Fission yeast).